A 100-amino-acid polypeptide reads, in one-letter code: Aspartyl/glutamyl-tRNA(Asn/Gln) amidotransferase subunit C (100 aa).

This sequence belongs to the GatC family. As to quaternary structure, heterotrimer of A, B and C subunits.

It carries out the reaction L-glutamyl-tRNA(Gln) + L-glutamine + ATP + H2O = L-glutaminyl-tRNA(Gln) + L-glutamate + ADP + phosphate + H(+). The enzyme catalyses L-aspartyl-tRNA(Asn) + L-glutamine + ATP + H2O = L-asparaginyl-tRNA(Asn) + L-glutamate + ADP + phosphate + 2 H(+). Its function is as follows. Allows the formation of correctly charged Asn-tRNA(Asn) or Gln-tRNA(Gln) through the transamidation of misacylated Asp-tRNA(Asn) or Glu-tRNA(Gln) in organisms which lack either or both of asparaginyl-tRNA or glutaminyl-tRNA synthetases. The reaction takes place in the presence of glutamine and ATP through an activated phospho-Asp-tRNA(Asn) or phospho-Glu-tRNA(Gln). The protein is Aspartyl/glutamyl-tRNA(Asn/Gln) amidotransferase subunit C of Streptococcus equi subsp. zooepidemicus (strain H70).